A 506-amino-acid polypeptide reads, in one-letter code: Glutamate--tRNA ligase (506 aa).

Positions 14–24 (PSPTGYLHIGG) match the 'HIGH' region motif. The 'KMSKS' region signature appears at 261 to 265 (KLSKR). K264 contributes to the ATP binding site.

The protein belongs to the class-I aminoacyl-tRNA synthetase family. Glutamate--tRNA ligase type 1 subfamily. As to quaternary structure, monomer.

It localises to the cytoplasm. It catalyses the reaction tRNA(Glu) + L-glutamate + ATP = L-glutamyl-tRNA(Glu) + AMP + diphosphate. Its function is as follows. Catalyzes the attachment of glutamate to tRNA(Glu) in a two-step reaction: glutamate is first activated by ATP to form Glu-AMP and then transferred to the acceptor end of tRNA(Glu). The chain is Glutamate--tRNA ligase from Roseiflexus sp. (strain RS-1).